Consider the following 86-residue polypeptide: NAD(P)H-quinone oxidoreductase subunit O (86 aa).

Belongs to the complex I NdhO subunit family. NDH-1 can be composed of about 15 different subunits; different subcomplexes with different compositions have been identified which probably have different functions.

The protein resides in the cellular thylakoid membrane. The enzyme catalyses a plastoquinone + NADH + (n+1) H(+)(in) = a plastoquinol + NAD(+) + n H(+)(out). It carries out the reaction a plastoquinone + NADPH + (n+1) H(+)(in) = a plastoquinol + NADP(+) + n H(+)(out). Its function is as follows. NDH-1 shuttles electrons from an unknown electron donor, via FMN and iron-sulfur (Fe-S) centers, to quinones in the respiratory and/or the photosynthetic chain. The immediate electron acceptor for the enzyme in this species is believed to be plastoquinone. Couples the redox reaction to proton translocation, and thus conserves the redox energy in a proton gradient. Cyanobacterial NDH-1 also plays a role in inorganic carbon-concentration. In Prochlorococcus marinus (strain SARG / CCMP1375 / SS120), this protein is NAD(P)H-quinone oxidoreductase subunit O.